The following is a 487-amino-acid chain: DNA polymerase delta small subunit (487 aa).

Methionine 1 is subject to N-acetylmethionine. Serine 20 carries the phosphoserine modification.

It belongs to the DNA polymerase delta/II small subunit family. DNA polymerase delta is a heterotrimer of POL3, POL32 and HYS2.

The protein localises to the nucleus. The enzyme catalyses DNA(n) + a 2'-deoxyribonucleoside 5'-triphosphate = DNA(n+1) + diphosphate. Its function is as follows. DNA polymerase delta (DNA polymerase III) participates in chromosomal DNA replication. It is required during synthesis of the leading and lagging DNA strands at the replication fork and binds at/or near replication origins and moves along DNA with the replication fork. It has 3'-5' proofreading exonuclease activity that correct errors arising during DNA replication. It is also involved in DNA synthesis during DNA repair. The sequence is that of DNA polymerase delta small subunit (POL31) from Saccharomyces cerevisiae (strain ATCC 204508 / S288c) (Baker's yeast).